The following is a 380-amino-acid chain: uncharacterized protein (380 aa).

Residues 256–301 adopt a coiled-coil conformation; sequence DKEEKIQKSYQYQTELITELQGRIAELEKENQSLKENVKEPETSKP.

This is an uncharacterized protein from Pasteurella multocida (strain Pm70).